The sequence spans 429 residues: Enolase (429 aa).

Gln167 provides a ligand contact to (2R)-2-phosphoglycerate. Glu209 serves as the catalytic Proton donor. Asp246, Glu289, and Asp316 together coordinate Mg(2+). Lys341, Arg370, Ser371, and Lys392 together coordinate (2R)-2-phosphoglycerate. Lys341 serves as the catalytic Proton acceptor.

This sequence belongs to the enolase family. Component of the RNA degradosome, a multiprotein complex involved in RNA processing and mRNA degradation. Requires Mg(2+) as cofactor.

Its subcellular location is the cytoplasm. It localises to the secreted. The protein localises to the cell surface. The enzyme catalyses (2R)-2-phosphoglycerate = phosphoenolpyruvate + H2O. It functions in the pathway carbohydrate degradation; glycolysis; pyruvate from D-glyceraldehyde 3-phosphate: step 4/5. In terms of biological role, catalyzes the reversible conversion of 2-phosphoglycerate (2-PG) into phosphoenolpyruvate (PEP). It is essential for the degradation of carbohydrates via glycolysis. The chain is Enolase from Pseudomonas entomophila (strain L48).